The primary structure comprises 204 residues: Dephospho-CoA kinase (204 aa).

Residues 5 to 204 (VVGLTGGIGS…YLANLVKAML (200 aa)) form the DPCK domain. ATP is bound at residue 13–18 (GSGKSA).

The protein belongs to the CoaE family.

It is found in the cytoplasm. It carries out the reaction 3'-dephospho-CoA + ATP = ADP + CoA + H(+). Its pathway is cofactor biosynthesis; coenzyme A biosynthesis; CoA from (R)-pantothenate: step 5/5. Catalyzes the phosphorylation of the 3'-hydroxyl group of dephosphocoenzyme A to form coenzyme A. This chain is Dephospho-CoA kinase, found in Chromobacterium violaceum (strain ATCC 12472 / DSM 30191 / JCM 1249 / CCUG 213 / NBRC 12614 / NCIMB 9131 / NCTC 9757 / MK).